Here is a 351-residue protein sequence, read N- to C-terminus: Protein Wnt-8a (351 aa).

An N-terminal signal peptide occupies residues 1-24; the sequence is MGNLFMLWAALGICCAAFSASAWS. Cys-54 and Cys-65 are joined by a disulfide. Residue Asn-103 is glycosylated (N-linked (GlcNAc...) asparagine). Cystine bridges form between Cys-104/Cys-112, Cys-114/Cys-132, Cys-180/Cys-194, Cys-182/Cys-189, Cys-259/Cys-297, Cys-275/Cys-290, Cys-294/Cys-336, Cys-312/Cys-327, Cys-314/Cys-324, and Cys-319/Cys-320. The O-palmitoleoyl serine moiety is linked to residue Ser-186. Asn-262 and Asn-281 each carry an N-linked (GlcNAc...) asparagine glycan.

It belongs to the Wnt family. Forms a soluble 1:1 complex with AFM; this prevents oligomerization and is required for prolonged biological activity. The complex with AFM may represent the physiological form in body fluids. Palmitoleoylation is required for efficient binding to frizzled receptors. Depalmitoleoylation leads to Wnt signaling pathway inhibition. In terms of processing, proteolytic processing by TIKI1 and TIKI2 promotes oxidation and formation of large disulfide-bond oligomers, leading to inactivation of WNT8A.

The protein localises to the secreted. It is found in the extracellular space. The protein resides in the extracellular matrix. In terms of biological role, ligand for members of the frizzled family of seven transmembrane receptors. Plays a role in embryonic patterning. The sequence is that of Protein Wnt-8a (WNT8A) from Homo sapiens (Human).